The chain runs to 669 residues: Elongation factor G-like protein (669 aa).

The tr-type G domain occupies 7 to 279 (ESLRNVAIVG…VLIKEAPDPS (273 aa)). Residues 16–23 (GPYGSGKT) form a G1 region. Residue 16 to 23 (GPYGSGKT) coordinates GTP. The interval 59 to 63 (QMSVE) is G2. Residues 80-83 (DCPG) form a G3 region. GTP-binding positions include 80 to 84 (DCPGS) and 134 to 137 (NKMD). The segment at 134 to 137 (NKMD) is G4. The tract at residues 257-259 (AAE) is G5.

This sequence belongs to the TRAFAC class translation factor GTPase superfamily. Classic translation factor GTPase family. EF-G/EF-2 subfamily.

The polypeptide is Elongation factor G-like protein (Synechocystis sp. (strain ATCC 27184 / PCC 6803 / Kazusa)).